We begin with the raw amino-acid sequence, 56 residues long: PI-stichotoxin-Hcr2p (56 aa).

Residues 4–54 enclose the BPTI/Kunitz inhibitor domain; that stretch reads CLEPKVVGPCTAYFRRFYYDSETGKCTPFIHGGCEGNGNNFETLRACRAIC. 3 disulfides stabilise this stretch: Cys4/Cys54, Cys13/Cys37, and Cys29/Cys50.

The protein belongs to the venom Kunitz-type family. Sea anemone type 2 potassium channel toxin subfamily.

The protein resides in the secreted. Its subcellular location is the nematocyst. Functionally, this recombinant serine protease inhibitor inhibits trypsin (Ki=100 nM). It may also inhibit the TRPV1 receptor of the pain pathway. It possesses anti-inflammatory activity in vitro. It blocks histamine influence on intracellular calcium concentration in murine bone marrow-derived macrophages (84% inhibition at 10 uM and 67.2% at 1 uM), which can indicate inhibition of H1-histamine receptor (HRH1). In vitro, it shows cytoprotective activity in the oxidative stress agent 6-hydroxydopamine (6-OHDA)-induced neurotoxicity model. In this model, it decreases reactive oxygen species (ROS) level, and increases cell viability in a correlated manner. In vivo, it shows analgesic activity, since it increases hot plate and tail flick withdrawal latencies, when using a mice thermal pain stimulation model. The polypeptide is PI-stichotoxin-Hcr2p (Radianthus crispa (Leathery sea anemone)).